A 249-amino-acid polypeptide reads, in one-letter code: Transcription repressor MYB5 (249 aa).

2 consecutive HTH myb-type domains span residues 20-72 (KMGM…MNYL) and 73-127 (RPSV…RKKL). 2 consecutive DNA-binding regions (H-T-H motif) follow at residues 48–72 (WRSL…MNYL) and 100–123 (WSLI…NTHL). The interval 133-180 (DPQTHKPLDANNIHKPEEEVSGGQKYPLEPISSSHTDDTTVNGGDGDS) is disordered. Basic and acidic residues predominate over residues 135–150 (QTHKPLDANNIHKPEE).

Interacts with BHLH002/EGL3/MYC146, BHLH012/MYC1 and BHLH042/TT8. Siliques.

The protein resides in the nucleus. Transcription activator, when associated with BHLH002/EGL3/MYC146, BHLH012/MYC1 or BHLH042/TT8. The polypeptide is Transcription repressor MYB5 (MYB5) (Arabidopsis thaliana (Mouse-ear cress)).